Consider the following 955-residue polypeptide: Sex determination protein fruitless (955 aa).

Disordered stretches follow at residues Met1–Ser55 and Ile70–Pro89. Residues Pro35 to Ser55 are compositionally biased toward basic residues. A compositionally biased stretch (pro residues) spans Ala76–Pro89. The BTB domain maps to Cys131–Gln196. 3 disordered regions span residues Leu229–Glu288, Asn352–Gly526, and Ala784–Gly814. The segment covering Ala233–Thr246 has biased composition (polar residues). Composition is skewed to basic and acidic residues over residues Ala258–Thr279 and Cys360–Leu379. Positions Lys387–Ser420 are enriched in low complexity. Over residues Asn421–Leu446 the composition is skewed to basic and acidic residues. Composition is skewed to low complexity over residues Ser464–Ser475 and Gln790–Gly814. The segment at His918–His941 adopts a C2H2-type zinc-finger fold.

Expressed in parts of the adult male brain associated with the courtship song and steps of the male courtship. Also expressed in the larval and pupal male mushroom body and optic lobe. Expressed in pupal female optic lobe.

Its subcellular location is the nucleus. In terms of biological role, probably acts as a transcriptional regulator. Part of the somatic sex determination hierarchy; sex determination genes transformer (tra) and transformer-2 (tra-2) switch fru splicing from the male-specific pattern to the female-specific pattern through activation of the female-specific fru 5'-splice site. Vital for the development of males and females. Controls the development of the male specific abdominal muscle of Lawrence. Plays a role in male courtship behavior and sexual orientation. Enhances male-specific expression of takeout in brain-associated fat body. This is Sex determination protein fruitless (fru) from Drosophila melanogaster (Fruit fly).